A 260-amino-acid chain; its full sequence is Snake venom serine protease salmobin (260 aa).

Residues 1 to 18 form the signal peptide; the sequence is MVLIKVLANHLILQLSYA. Residues 19–24 constitute a propeptide that is removed on maturation; sequence QKSSEL. The 227-residue stretch at 25-251 folds into the Peptidase S1 domain; it reads VIGGDECNIN…YTDWIQSIIA (227 aa). Cystine bridges form between C31–C165, C52–C68, C102–C258, C144–C212, C176–C191, and C202–C227. H67 acts as the Charge relay system in catalysis. N-linked (GlcNAc...) asparagine glycosylation occurs at N105. Residue D112 is the Charge relay system of the active site. 2 N-linked (GlcNAc...) asparagine glycosylation sites follow: N123 and N156. S206 acts as the Charge relay system in catalysis.

This sequence belongs to the peptidase S1 family. Snake venom subfamily. As to quaternary structure, monomer. Expressed by the venom gland.

It localises to the secreted. Snake venom serine protease that may act in the hemostasis system of the prey. The sequence is that of Snake venom serine protease salmobin from Gloydius halys (Chinese water mocassin).